A 401-amino-acid polypeptide reads, in one-letter code: Voltage-gated potassium channel subunit beta-3 (401 aa).

Polar residues-rich tracts occupy residues 1–14 and 32–41; these read MQVS…TLRS and GVSMAQTKQR. Positions 1–49 are disordered; sequence MQVSFACTEQTLRSRTSEDRLCPSRPSGGQNGVSMAQTKQRTPPMGAKN. NADP(+) is bound by residues T90, W91, Q97, and D119. Residue Y124 is the Proton donor/acceptor of the active site. N192, S222, R223, Q248, W277, S278, P279, L280, A281, C282, K288, R298, G357, S359, Q363, E366, and N367 together coordinate NADP(+).

Belongs to the shaker potassium channel beta subunit family. Forms heteromultimeric complex with alpha subunits. Identified in potassium channel complexes containing KCNA1 and KCNA2.

The protein localises to the cytoplasm. Functionally, regulatory subunit of the voltage-gated potassium (Kv) channels composed of pore-forming and potassium-conducting alpha subunits and of regulatory beta subunit. The beta-3/KCNAB3 subunit may mediate closure of potassium channels. Increases and accelerates inactivation of Kv1.1/KCNA1 and Kv2.2/KCNA2 subunit-containing channels. May display nicotinamide adenine dinucleotide phosphate (NADPH)-dependent aldoketoreductase activity. The binding of oxidized and reduced NADP(H) cofactors may be required for the regulation of potassium channel activity. The protein is Voltage-gated potassium channel subunit beta-3 (kcnab3) of Xenopus laevis (African clawed frog).